The primary structure comprises 656 residues: MFKLVSDYEPTGDQPQAIDRLVEGIKKGYRFQTLIGVTGSGKTFTMANVISRLNRPALVISPNKTLAAQLYGEFKTFFPHNRVEYFISYYDYYQPEAYVPTKDLYIEKNADINDVLVRMRMSALKSVRTRRDVVVVASVSSIYASGDPSDFDRMNIQLSTGLKISPHAVAQHLAKIGYERSNEITVKGCFRLRGDVLEIYPTYQDEGIRIEFFGSVVDRIETFDKLNRSPLEELQKIIIYPAIEFVTTEEKLKRAVESIKNELDQRLTELKNQGKILEAQRLQQRTMHDLELLSALGYCPGIENYSRHFDGRKPGEPPYTLLDYFDDDVLVFLDESHIAVPQLRAMWRGEHSRKKSLVEYGFRLPSAFDNRPLTFEEFLKKVPQIIFVSATPGPFEYQVSEQIVEQIIRPTGLIDPEVEVRPTKYQVDDLISEIKKVVERGERALITVLTKKTAEKLSEYLVEMGIKSLYIHSELDAIERIEVLKKLRRGDVDAVVGINLLREGLDLPEVSLVAILDSDKEGFLRSETTLIQIIGRVARNLNGKVLMYADRVTPAMQRAIDETNRRRKIQMEYNEKYGITPKTIVKPLQIEIFEKFMEKPEIDYHQLAKDLSKEEYLSLLEEEMYRAASELRYEDAAKLRDEIFRLREELKDENYL.

In terms of domain architecture, Helicase ATP-binding spans 23–180; that stretch reads EGIKKGYRFQ…QHLAKIGYER (158 aa). 36 to 43 is a binding site for ATP; that stretch reads GVTGSGKT. The short motif at 89–112 is the Beta-hairpin element; it reads YYDYYQPEAYVPTKDLYIEKNADI. Residues 426–588 enclose the Helicase C-terminal domain; sequence QVDDLISEIK…ITPKTIVKPL (163 aa). Residues 614-649 enclose the UVR domain; that stretch reads EEYLSLLEEEMYRAASELRYEDAAKLRDEIFRLREE.

This sequence belongs to the UvrB family. Forms a heterotetramer with UvrA during the search for lesions. Interacts with UvrC in an incision complex.

Its subcellular location is the cytoplasm. The UvrABC repair system catalyzes the recognition and processing of DNA lesions. A damage recognition complex composed of 2 UvrA and 2 UvrB subunits scans DNA for abnormalities. Upon binding of the UvrA(2)B(2) complex to a putative damaged site, the DNA wraps around one UvrB monomer. DNA wrap is dependent on ATP binding by UvrB and probably causes local melting of the DNA helix, facilitating insertion of UvrB beta-hairpin between the DNA strands. Then UvrB probes one DNA strand for the presence of a lesion. If a lesion is found the UvrA subunits dissociate and the UvrB-DNA preincision complex is formed. This complex is subsequently bound by UvrC and the second UvrB is released. If no lesion is found, the DNA wraps around the other UvrB subunit that will check the other stand for damage. The polypeptide is UvrABC system protein B (Pseudothermotoga lettingae (strain ATCC BAA-301 / DSM 14385 / NBRC 107922 / TMO) (Thermotoga lettingae)).